The following is a 262-amino-acid chain: Hydroxyethylthiazole kinase (262 aa).

Methionine 50 is a binding site for substrate. ATP is bound by residues arginine 125 and threonine 171. Position 198 (glycine 198) interacts with substrate.

The protein belongs to the Thz kinase family. The cofactor is Mg(2+).

It catalyses the reaction 5-(2-hydroxyethyl)-4-methylthiazole + ATP = 4-methyl-5-(2-phosphooxyethyl)-thiazole + ADP + H(+). The protein operates within cofactor biosynthesis; thiamine diphosphate biosynthesis; 4-methyl-5-(2-phosphoethyl)-thiazole from 5-(2-hydroxyethyl)-4-methylthiazole: step 1/1. Catalyzes the phosphorylation of the hydroxyl group of 4-methyl-5-beta-hydroxyethylthiazole (THZ). In Escherichia coli (strain SMS-3-5 / SECEC), this protein is Hydroxyethylthiazole kinase.